Consider the following 246-residue polypeptide: tRNA (guanine-N(1)-)-methyltransferase (246 aa).

Residues Gly-112 and 131–136 (IGDYVL) contribute to the S-adenosyl-L-methionine site.

Belongs to the RNA methyltransferase TrmD family. As to quaternary structure, homodimer.

It is found in the cytoplasm. The enzyme catalyses guanosine(37) in tRNA + S-adenosyl-L-methionine = N(1)-methylguanosine(37) in tRNA + S-adenosyl-L-homocysteine + H(+). Specifically methylates guanosine-37 in various tRNAs. The polypeptide is tRNA (guanine-N(1)-)-methyltransferase (Thermosipho melanesiensis (strain DSM 12029 / CIP 104789 / BI429)).